The chain runs to 1135 residues: Nonribosomal peptide synthetase 9 (1135 aa).

The interval 23 to 77 (TKQITTATYIKLAWAVVISCNTGSNDTVFGITVNGRGAPIDGAGEMTGATIATIP) is condensation 1. The adenylation stretch occupies residues 177–562 (SYAELIRSAN…RRIDEIQEAT (386 aa)). A disordered region spans residues 485–507 (GPSPPVGRSSSNRAGSGRCAMGS). Over residues 491–502 (GRSSSNRAGSGR) the composition is skewed to low complexity. Positions 672–748 (APSNRVEQDL…AIANKIGDVQ (77 aa)) constitute a Carrier domain. Ser709 is modified (O-(pantetheine 4'-phosphoryl)serine). Residues 746-999 (DVQRAAIKLV…TTLWPVVAQV (254 aa)) are condensation 2.

The protein belongs to the NRP synthetase family.

Nonribosomal peptide synthesis (NRPS) is a key mechanism responsible for the biosynthesis of bioactive metabolites which are potentially contributing to organismal virulence. In Aspergillus fumigatus (strain ATCC MYA-4609 / CBS 101355 / FGSC A1100 / Af293) (Neosartorya fumigata), this protein is Nonribosomal peptide synthetase 9 (NRPS9).